The primary structure comprises 356 residues: Guanine nucleotide-binding protein alpha-15 subunit (356 aa).

A lipid anchor (N-myristoyl glycine) is attached at G2. C5 carries the S-palmitoyl cysteine lipid modification. The G-alpha domain occupies 33–356 (GNQKLLLLGT…GRNLRGTGME (324 aa)). The tract at residues 36 to 49 (KLLLLGTGECGKST) is G1 motif. GTP-binding positions include 41–48 (GTGECGKS), 177–183 (LRIRIPT), 202–206 (DVGGQ), 271–274 (NKRD), and A328. The Mg(2+) site is built by S48 and T183. The tract at residues 175–183 (DMLRIRIPT) is G2 motif. Positions 198–207 (FRIYDVGGQR) are G3 motif. Positions 267 to 274 (ILFLNKRD) are G4 motif. Residues 326–331 (TCATDT) are G5 motif.

This sequence belongs to the G-alpha family. In terms of assembly, g proteins are composed of 3 units; alpha, beta and gamma. The alpha chain contains the guanine nucleotide binding site.

Its function is as follows. Guanine nucleotide-binding proteins (G proteins) are involved as modulators or transducers in various transmembrane signaling systems. The protein is Guanine nucleotide-binding protein alpha-15 subunit (gpa-15) of Caenorhabditis elegans.